Consider the following 63-residue polypeptide: MKAKELREKSVEELNTELLNLLREQFNLRMQAASGQLQQSHLLKQVRRDVARVKTLLTEKAGA.

It belongs to the universal ribosomal protein uL29 family.

This Salmonella agona (strain SL483) protein is Large ribosomal subunit protein uL29.